The primary structure comprises 399 residues: 1-deoxy-D-xylulose 5-phosphate reductoisomerase (399 aa).

NADPH is bound by residues Thr16, Gly17, Ser18, Ile19, Gly42, Arg43, Asn44, and Asn127. Lys128 serves as a coordination point for 1-deoxy-D-xylulose 5-phosphate. Glu129 provides a ligand contact to NADPH. Mn(2+) is bound at residue Asp153. 4 residues coordinate 1-deoxy-D-xylulose 5-phosphate: Ser154, Glu155, Ser179, and His202. A Mn(2+)-binding site is contributed by Glu155. Gly208 lines the NADPH pocket. Residues Ser215, Asn220, Lys221, and Glu224 each contribute to the 1-deoxy-D-xylulose 5-phosphate site. Glu224 is a Mn(2+) binding site.

This sequence belongs to the DXR family. The cofactor is Mg(2+). Requires Mn(2+) as cofactor.

It catalyses the reaction 2-C-methyl-D-erythritol 4-phosphate + NADP(+) = 1-deoxy-D-xylulose 5-phosphate + NADPH + H(+). Its pathway is isoprenoid biosynthesis; isopentenyl diphosphate biosynthesis via DXP pathway; isopentenyl diphosphate from 1-deoxy-D-xylulose 5-phosphate: step 1/6. Its function is as follows. Catalyzes the NADPH-dependent rearrangement and reduction of 1-deoxy-D-xylulose-5-phosphate (DXP) to 2-C-methyl-D-erythritol 4-phosphate (MEP). The sequence is that of 1-deoxy-D-xylulose 5-phosphate reductoisomerase from Caulobacter vibrioides (strain NA1000 / CB15N) (Caulobacter crescentus).